We begin with the raw amino-acid sequence, 296 residues long: Isoprenyl transferase (296 aa).

Over residues 1–11 (MATERNRRRKG) the composition is skewed to basic residues. Residues 1-29 (MATERNRRRKGSYPQLPPAPDDYPTFPDK) are disordered. Residue Asp-76 is part of the active site. Asp-76 contacts Mg(2+). Substrate contacts are provided by residues 77 to 80 (GNGR), Trp-81, Arg-89, His-93, and 121 to 123 (STE). Residue Asn-124 is the Proton acceptor of the active site. Substrate-binding positions include Trp-125, Arg-127, Arg-244, and 250–252 (RAS). Glu-263 lines the Mg(2+) pocket.

This sequence belongs to the UPP synthase family. As to quaternary structure, homodimer. Mg(2+) serves as cofactor.

Functionally, catalyzes the condensation of isopentenyl diphosphate (IPP) with allylic pyrophosphates generating different type of terpenoids. In Mycolicibacterium parafortuitum (Mycobacterium parafortuitum), this protein is Isoprenyl transferase.